We begin with the raw amino-acid sequence, 348 residues long: Anthranilate phosphoribosyltransferase (348 aa).

Residues Gly89, 92–93 (GD), Thr97, 99–102 (NIST), 117–125 (KHGNRSASS), and Ser129 contribute to the 5-phospho-alpha-D-ribose 1-diphosphate site. Residue Gly89 coordinates anthranilate. Ser101 provides a ligand contact to Mg(2+). Residue Asn120 participates in anthranilate binding. Arg175 is an anthranilate binding site. Asp234 and Glu235 together coordinate Mg(2+).

The protein belongs to the anthranilate phosphoribosyltransferase family. Homodimer. The cofactor is Mg(2+).

The enzyme catalyses N-(5-phospho-beta-D-ribosyl)anthranilate + diphosphate = 5-phospho-alpha-D-ribose 1-diphosphate + anthranilate. The protein operates within amino-acid biosynthesis; L-tryptophan biosynthesis; L-tryptophan from chorismate: step 2/5. In terms of biological role, catalyzes the transfer of the phosphoribosyl group of 5-phosphorylribose-1-pyrophosphate (PRPP) to anthranilate to yield N-(5'-phosphoribosyl)-anthranilate (PRA). The protein is Anthranilate phosphoribosyltransferase of Synechocystis sp. (strain ATCC 27184 / PCC 6803 / Kazusa).